Here is a 292-residue protein sequence, read N- to C-terminus: tRNA pseudouridine synthase B (292 aa).

Asp40 functions as the Nucleophile in the catalytic mechanism.

The protein belongs to the pseudouridine synthase TruB family. Type 1 subfamily.

The enzyme catalyses uridine(55) in tRNA = pseudouridine(55) in tRNA. In terms of biological role, responsible for synthesis of pseudouridine from uracil-55 in the psi GC loop of transfer RNAs. The polypeptide is tRNA pseudouridine synthase B (Mycoplasma mycoides subsp. mycoides SC (strain CCUG 32753 / NCTC 10114 / PG1)).